The sequence spans 41 residues: Large ribosomal subunit protein bL36 (41 aa).

It belongs to the bacterial ribosomal protein bL36 family.

The sequence is that of Large ribosomal subunit protein bL36 from Gluconacetobacter diazotrophicus (strain ATCC 49037 / DSM 5601 / CCUG 37298 / CIP 103539 / LMG 7603 / PAl5).